A 38-amino-acid chain; its full sequence is Large ribosomal subunit protein bL36 (38 aa).

The protein belongs to the bacterial ribosomal protein bL36 family.

This Psychrobacter arcticus (strain DSM 17307 / VKM B-2377 / 273-4) protein is Large ribosomal subunit protein bL36.